The primary structure comprises 330 residues: Phosphate acyltransferase (330 aa).

It belongs to the PlsX family. In terms of assembly, homodimer. Probably interacts with PlsY.

It is found in the cytoplasm. The enzyme catalyses a fatty acyl-[ACP] + phosphate = an acyl phosphate + holo-[ACP]. The protein operates within lipid metabolism; phospholipid metabolism. In terms of biological role, catalyzes the reversible formation of acyl-phosphate (acyl-PO(4)) from acyl-[acyl-carrier-protein] (acyl-ACP). This enzyme utilizes acyl-ACP as fatty acyl donor, but not acyl-CoA. The sequence is that of Phosphate acyltransferase from Streptococcus agalactiae serotype Ia (strain ATCC 27591 / A909 / CDC SS700).